A 590-amino-acid polypeptide reads, in one-letter code: Arginine--tRNA ligase, cytoplasmic (590 aa).

Position 2 is an N-acetylalanine (Ala2). L-arginine-binding positions include 137 to 139, His148, Tyr322, Asp326, and Gln350; that span reads SPN. Residues 138 to 149 carry the 'HIGH' region motif; that stretch reads PNIAKEMHVGHL. The segment at 470-484 is interaction with tRNA; the sequence is DTAVYLLYAHARICS.

It belongs to the class-I aminoacyl-tRNA synthetase family.

The protein localises to the cytoplasm. The protein resides in the cytosol. The catalysed reaction is tRNA(Arg) + L-arginine + ATP = L-arginyl-tRNA(Arg) + AMP + diphosphate. In terms of biological role, forms part of a macromolecular complex that catalyzes the attachment of specific amino acids to cognate tRNAs during protein synthesis. The sequence is that of Arginine--tRNA ligase, cytoplasmic from Arabidopsis thaliana (Mouse-ear cress).